The chain runs to 295 residues: Phosphatidylserine decarboxylase proenzyme (295 aa).

Active-site charge relay system; for autoendoproteolytic cleavage activity residues include D113, H169, and S256. The Schiff-base intermediate with substrate; via pyruvic acid; for decarboxylase activity role is filled by S256. S256 is modified (pyruvic acid (Ser); by autocatalysis).

It belongs to the phosphatidylserine decarboxylase family. PSD-B subfamily. Prokaryotic type II sub-subfamily. In terms of assembly, heterodimer of a large membrane-associated beta subunit and a small pyruvoyl-containing alpha subunit. It depends on pyruvate as a cofactor. Post-translationally, is synthesized initially as an inactive proenzyme. Formation of the active enzyme involves a self-maturation process in which the active site pyruvoyl group is generated from an internal serine residue via an autocatalytic post-translational modification. Two non-identical subunits are generated from the proenzyme in this reaction, and the pyruvate is formed at the N-terminus of the alpha chain, which is derived from the carboxyl end of the proenzyme. The autoendoproteolytic cleavage occurs by a canonical serine protease mechanism, in which the side chain hydroxyl group of the serine supplies its oxygen atom to form the C-terminus of the beta chain, while the remainder of the serine residue undergoes an oxidative deamination to produce ammonia and the pyruvoyl prosthetic group on the alpha chain. During this reaction, the Ser that is part of the protease active site of the proenzyme becomes the pyruvoyl prosthetic group, which constitutes an essential element of the active site of the mature decarboxylase.

The protein localises to the cell membrane. The enzyme catalyses a 1,2-diacyl-sn-glycero-3-phospho-L-serine + H(+) = a 1,2-diacyl-sn-glycero-3-phosphoethanolamine + CO2. It functions in the pathway phospholipid metabolism; phosphatidylethanolamine biosynthesis; phosphatidylethanolamine from CDP-diacylglycerol: step 2/2. Functionally, catalyzes the formation of phosphatidylethanolamine (PtdEtn) from phosphatidylserine (PtdSer). The chain is Phosphatidylserine decarboxylase proenzyme from Clostridium botulinum (strain 657 / Type Ba4).